Here is a 203-residue protein sequence, read N- to C-terminus: Outer-membrane lipoprotein carrier protein (203 aa).

The signal sequence occupies residues 1-21 (MKKIAITCALLSSLVASSVWA).

Belongs to the LolA family. As to quaternary structure, monomer.

It localises to the periplasm. Its function is as follows. Participates in the translocation of lipoproteins from the inner membrane to the outer membrane. Only forms a complex with a lipoprotein if the residue after the N-terminal Cys is not an aspartate (The Asp acts as a targeting signal to indicate that the lipoprotein should stay in the inner membrane). This Escherichia coli O139:H28 (strain E24377A / ETEC) protein is Outer-membrane lipoprotein carrier protein.